The sequence spans 561 residues: DNA ligase B (561 aa).

Lys-125 acts as the N6-AMP-lysine intermediate in catalysis.

The protein belongs to the NAD-dependent DNA ligase family. LigB subfamily.

The catalysed reaction is NAD(+) + (deoxyribonucleotide)n-3'-hydroxyl + 5'-phospho-(deoxyribonucleotide)m = (deoxyribonucleotide)n+m + AMP + beta-nicotinamide D-nucleotide.. In terms of biological role, catalyzes the formation of phosphodiester linkages between 5'-phosphoryl and 3'-hydroxyl groups in double-stranded DNA using NAD as a coenzyme and as the energy source for the reaction. The protein is DNA ligase B of Salmonella dublin (strain CT_02021853).